Here is a 692-residue protein sequence, read N- to C-terminus: 5-taurinomethyluridine-[tRNA] synthase subunit MTO1, mitochondrial (692 aa).

The transit peptide at 1–25 directs the protein to the mitochondrion; that stretch reads MFYLRGCGRWVAASFTKQQFPLVRL. FAD contacts are provided by residues 43–48, Val-155, Ser-218, and Gln-407; that span reads GGGHAG. Residue Lys-508 is modified to N6-methyllysine. A disordered region spans residues 669-692; sequence AAMNESPKTDQCLRNADRLQERQL. A compositionally biased stretch (basic and acidic residues) spans 683–692; the sequence is NADRLQERQL.

It belongs to the MnmG family. As to quaternary structure, homodimer; forms a dimer in the presence of potassium. Interacts with GTPBP3; forms the GTPBP3-MTO1 complex composed of homodimers of GTPBP3 and MTO1. Requires FAD as cofactor.

The protein localises to the mitochondrion. It catalyses the reaction 5,10-methylenetetrahydrofolate + uridine(34) in tRNA + taurine + GTP + A + H2O = 5-taurinomethyluridine(34) in tRNA + 7,8-dihydrofolate + GDP + AH2 + phosphate + H(+). In terms of biological role, component of the GTPBP3-MTO1 complex that catalyzes the 5-taurinomethyluridine (taum(5)U) modification at the 34th wobble position (U34) of mitochondrial tRNAs (mt-tRNAs), which plays a role in mt-tRNA decoding and mitochondrial translation. Taum(5)U formation on mammalian mt-tRNA requires the presence of both GTPBP3-mediated GTPase activity and MTO1 catalytic activity. The chain is 5-taurinomethyluridine-[tRNA] synthase subunit MTO1, mitochondrial (MTO1) from Macaca fascicularis (Crab-eating macaque).